The primary structure comprises 1453 residues: Leucine-rich repeat-containing protein 9 (1453 aa).

7 LRR repeats span residues 53–78 (FPNL…CLQL), 97–119 (CRNL…LEKL), 120–141 (IKLK…LQTL), 142–164 (KNLK…LDSN), 166–188 (QLER…NLTR), 224–248 (LQRF…AMKK), and 264–287 (KEDL…RVKL). A disordered region spans residues 302–321 (LKGSGKGHSDGSNNSKVTDP). 23 LRR repeats span residues 344-367 (LNAL…IYHI), 671-693 (KARP…TSVY), 694-715 (SHIV…LSKL), 716-737 (TGLR…VYHL), 739-758 (NLEY…GFRG), 759-784 (LMKL…MLCK), 786-812 (TTSL…VIGR), 886-908 (YLKI…LEKL), 909-930 (ENLK…LESC), 931-952 (INLE…ISKM), 953-975 (TKLT…TFDN), 976-1001 (MLHL…SFTL), 1023-1048 (LCNL…LFVI), 1092-1115 (FKQM…PVDQ), 1116-1138 (FRNV…LIYL), 1139-1161 (PNVK…LKPQ), 1201-1224 (MHSL…QLNR), 1225-1247 (LRNL…LDNL), 1248-1270 (VVLQ…AFAK), 1272-1292 (SSLL…KLQS), 1293-1317 (LVKL…KLDV), 1319-1345 (STLR…IFRL), and 1365-1388 (EFHL…PMDG).

This chain is Leucine-rich repeat-containing protein 9 (LRRC9), found in Homo sapiens (Human).